The chain runs to 296 residues: Glycine--tRNA ligase alpha subunit (296 aa).

It belongs to the class-II aminoacyl-tRNA synthetase family. In terms of assembly, tetramer of two alpha and two beta subunits.

The protein resides in the cytoplasm. It carries out the reaction tRNA(Gly) + glycine + ATP = glycyl-tRNA(Gly) + AMP + diphosphate. The chain is Glycine--tRNA ligase alpha subunit from Francisella philomiragia subsp. philomiragia (strain ATCC 25017 / CCUG 19701 / FSC 153 / O#319-036).